We begin with the raw amino-acid sequence, 398 residues long: 1-deoxy-D-xylulose 5-phosphate reductoisomerase (398 aa).

5 residues coordinate NADPH: threonine 11, glycine 12, serine 13, isoleucine 14, and asparagine 125. Position 126 (lysine 126) interacts with 1-deoxy-D-xylulose 5-phosphate. Glutamate 127 contacts NADPH. Residue aspartate 151 coordinates Mn(2+). The 1-deoxy-D-xylulose 5-phosphate site is built by serine 152, glutamate 153, serine 186, and histidine 209. Glutamate 153 provides a ligand contact to Mn(2+). Glycine 215 contacts NADPH. Positions 222, 227, 228, and 231 each coordinate 1-deoxy-D-xylulose 5-phosphate. Glutamate 231 is a binding site for Mn(2+).

The protein belongs to the DXR family. It depends on Mg(2+) as a cofactor. The cofactor is Mn(2+).

The enzyme catalyses 2-C-methyl-D-erythritol 4-phosphate + NADP(+) = 1-deoxy-D-xylulose 5-phosphate + NADPH + H(+). It functions in the pathway isoprenoid biosynthesis; isopentenyl diphosphate biosynthesis via DXP pathway; isopentenyl diphosphate from 1-deoxy-D-xylulose 5-phosphate: step 1/6. In terms of biological role, catalyzes the NADPH-dependent rearrangement and reduction of 1-deoxy-D-xylulose-5-phosphate (DXP) to 2-C-methyl-D-erythritol 4-phosphate (MEP). This is 1-deoxy-D-xylulose 5-phosphate reductoisomerase from Acinetobacter baylyi (strain ATCC 33305 / BD413 / ADP1).